Reading from the N-terminus, the 489-residue chain is MTFRNCVAVDLGASSGRVMLARYERECRSLTLREIHRFNNGLHSQNGYVTWNVDSLESAIRLGLNKVCEEGIRIDSIGIDTWGVDFVLLDQQGQRVGLPVAYRDSRTNGLMAQAQQQLGKRDIYQRSGIQFLPFNTIYQLRALTEQQPELIPHIAHALLIPDYFSYRLTGKMNWEYTNATTTQLVNINSDDWDESLLAWSGANKAWFGRPTHPGNVIGHWICPQGNEIPVVAVASHDTASAVIASPLNGSRAAYLSSGTWSLMGFESQTPFTNDTALAANITNEGGAEGRYRVLKNIMGLWLLQRVLQERQINDLPALIAATQALPACRFIINPNDDRFINPDEMCSEIQAACRETAQPIPESDAELARCIFDSLALLYADVLHELAQLRGEDFSQLHIVGGGCQNTLLNQLCADACGIRVIAGPVEASTLGNIGIQLMTLDELNNVDDFRQVVSTTANLTTFTPNPDSEIAHYVAQIHSTRQTKELCA.

An ATP-binding site is contributed by 13–17; sequence ASSGR. Residues C68 and C222 are joined by a disulfide bond. Substrate contacts are provided by residues G83 and 236-238; that span reads HDT. D237 (proton acceptor) is an active-site residue. T259 serves as a coordination point for ATP. N296 serves as a coordination point for substrate. Position 304 (Q304) interacts with ATP. Cysteines 353 and 370 form a disulfide. G402 is a binding site for ATP. A disulfide bond links C413 and C417.

This sequence belongs to the rhamnulokinase family. In terms of assembly, monomer. Requires Mg(2+) as cofactor.

The enzyme catalyses L-rhamnulose + ATP = L-rhamnulose 1-phosphate + ADP + H(+). Its pathway is carbohydrate degradation; L-rhamnose degradation; glycerone phosphate from L-rhamnose: step 2/3. Functionally, involved in the catabolism of L-rhamnose (6-deoxy-L-mannose). Catalyzes the transfer of the gamma-phosphate group from ATP to the 1-hydroxyl group of L-rhamnulose to yield L-rhamnulose 1-phosphate. The chain is Rhamnulokinase from Escherichia coli O1:K1 / APEC.